A 114-amino-acid polypeptide reads, in one-letter code: Ribonuclease P protein component (114 aa).

The protein belongs to the RnpA family. As to quaternary structure, consists of a catalytic RNA component (M1 or rnpB) and a protein subunit.

The enzyme catalyses Endonucleolytic cleavage of RNA, removing 5'-extranucleotides from tRNA precursor.. Functionally, RNaseP catalyzes the removal of the 5'-leader sequence from pre-tRNA to produce the mature 5'-terminus. It can also cleave other RNA substrates such as 4.5S RNA. The protein component plays an auxiliary but essential role in vivo by binding to the 5'-leader sequence and broadening the substrate specificity of the ribozyme. The sequence is that of Ribonuclease P protein component from Lactiplantibacillus plantarum (strain ATCC BAA-793 / NCIMB 8826 / WCFS1) (Lactobacillus plantarum).